A 350-amino-acid chain; its full sequence is Methylthioribose-1-phosphate isomerase (350 aa).

Residues 47–49, Arg-90, and Gln-197 contribute to the substrate site; that span reads RGA. The active-site Proton donor is Asp-238. 248-249 lines the substrate pocket; sequence NK.

The protein belongs to the eIF-2B alpha/beta/delta subunits family. MtnA subfamily.

It carries out the reaction 5-(methylsulfanyl)-alpha-D-ribose 1-phosphate = 5-(methylsulfanyl)-D-ribulose 1-phosphate. It participates in amino-acid biosynthesis; L-methionine biosynthesis via salvage pathway; L-methionine from S-methyl-5-thio-alpha-D-ribose 1-phosphate: step 1/6. Functionally, catalyzes the interconversion of methylthioribose-1-phosphate (MTR-1-P) into methylthioribulose-1-phosphate (MTRu-1-P). The sequence is that of Methylthioribose-1-phosphate isomerase from Nitratidesulfovibrio vulgaris (strain DP4) (Desulfovibrio vulgaris).